The chain runs to 527 residues: Peptide chain release factor 3 (527 aa).

The tr-type G domain maps to 9–277 (AKRRTFAIIS…AVVDWAPLPL (269 aa)). GTP contacts are provided by residues 18 to 25 (SHPDAGKT), 86 to 90 (DTPGH), and 140 to 143 (NKLD).

It belongs to the TRAFAC class translation factor GTPase superfamily. Classic translation factor GTPase family. PrfC subfamily.

The protein resides in the cytoplasm. Its function is as follows. Increases the formation of ribosomal termination complexes and stimulates activities of RF-1 and RF-2. It binds guanine nucleotides and has strong preference for UGA stop codons. It may interact directly with the ribosome. The stimulation of RF-1 and RF-2 is significantly reduced by GTP and GDP, but not by GMP. The chain is Peptide chain release factor 3 from Pseudomonas fluorescens (strain ATCC BAA-477 / NRRL B-23932 / Pf-5).